The following is a 311-amino-acid chain: tRNA-cytidine(32) 2-sulfurtransferase (311 aa).

The short motif at 47–52 (SGGKDS) is the PP-loop motif element. Residues Cys122, Cys125, and Cys213 each contribute to the [4Fe-4S] cluster site.

It belongs to the TtcA family. As to quaternary structure, homodimer. It depends on Mg(2+) as a cofactor. Requires [4Fe-4S] cluster as cofactor.

It localises to the cytoplasm. The catalysed reaction is cytidine(32) in tRNA + S-sulfanyl-L-cysteinyl-[cysteine desulfurase] + AH2 + ATP = 2-thiocytidine(32) in tRNA + L-cysteinyl-[cysteine desulfurase] + A + AMP + diphosphate + H(+). It participates in tRNA modification. Catalyzes the ATP-dependent 2-thiolation of cytidine in position 32 of tRNA, to form 2-thiocytidine (s(2)C32). The sulfur atoms are provided by the cysteine/cysteine desulfurase (IscS) system. The polypeptide is tRNA-cytidine(32) 2-sulfurtransferase (Salmonella paratyphi B (strain ATCC BAA-1250 / SPB7)).